A 467-amino-acid chain; its full sequence is ATP synthase subunit beta (467 aa).

152-159 provides a ligand contact to ATP; that stretch reads GGAGVGKT.

Belongs to the ATPase alpha/beta chains family. In terms of assembly, F-type ATPases have 2 components, CF(1) - the catalytic core - and CF(0) - the membrane proton channel. CF(1) has five subunits: alpha(3), beta(3), gamma(1), delta(1), epsilon(1). CF(0) has three main subunits: a(1), b(2) and c(9-12). The alpha and beta chains form an alternating ring which encloses part of the gamma chain. CF(1) is attached to CF(0) by a central stalk formed by the gamma and epsilon chains, while a peripheral stalk is formed by the delta and b chains.

The protein resides in the cell membrane. It carries out the reaction ATP + H2O + 4 H(+)(in) = ADP + phosphate + 5 H(+)(out). Its function is as follows. Produces ATP from ADP in the presence of a proton gradient across the membrane. The catalytic sites are hosted primarily by the beta subunits. This chain is ATP synthase subunit beta, found in Caldicellulosiruptor bescii (strain ATCC BAA-1888 / DSM 6725 / KCTC 15123 / Z-1320) (Anaerocellum thermophilum).